The chain runs to 454 residues: MSESTTAKPTKKLYIQTHGCQMNEYDSSRMRDLLGASHDMVPTDNPEEADVLLVNTCSIREKAQEKLFHQLGRWKHLKEAKPDLVIGVGGCVASQEGDAISKRAPFVDLIFGPQTLHRLPEMIETPRENGAVVVDISFPEIEKFDNLPEPEADGATAFVSVMEGCSKYCTFCVVPYTRGEEVSRPAVDVLREVTHLASQGVREVNLLGQNVNAYRDDSSGEVIDLAELIAAVADIDGIDRIRFTTSHPMEFTESLIQAYAEIPELVSHLHLPVQSGSDRILSAMKRGHTCLEYKSKLRKIRALRPDISFSSDFIIGFPGETEADFAATMKLIEDIGFDNSFSFIYSPRPGTPAADLPDDTPEQVKKDRLKILQTRIIQQAQEISRRMVGNTERVLVTGYSKKDPGQLSGRTENNRVVNFRCNQPELIGKFADILIEEALPNSLRGVLLGSELDD.

Residues 11–128 form the MTTase N-terminal domain; the sequence is KKLYIQTHGC…LPEMIETPRE (118 aa). Cys-20, Cys-57, Cys-91, Cys-165, Cys-169, and Cys-172 together coordinate [4Fe-4S] cluster. Positions 151-382 constitute a Radical SAM core domain; the sequence is EADGATAFVS…QTRIIQQAQE (232 aa). The TRAM domain occupies 385–449; that stretch reads RRMVGNTERV…PNSLRGVLLG (65 aa).

It belongs to the methylthiotransferase family. MiaB subfamily. Monomer. It depends on [4Fe-4S] cluster as a cofactor.

Its subcellular location is the cytoplasm. The catalysed reaction is N(6)-dimethylallyladenosine(37) in tRNA + (sulfur carrier)-SH + AH2 + 2 S-adenosyl-L-methionine = 2-methylsulfanyl-N(6)-dimethylallyladenosine(37) in tRNA + (sulfur carrier)-H + 5'-deoxyadenosine + L-methionine + A + S-adenosyl-L-homocysteine + 2 H(+). Functionally, catalyzes the methylthiolation of N6-(dimethylallyl)adenosine (i(6)A), leading to the formation of 2-methylthio-N6-(dimethylallyl)adenosine (ms(2)i(6)A) at position 37 in tRNAs that read codons beginning with uridine. In Saccharophagus degradans (strain 2-40 / ATCC 43961 / DSM 17024), this protein is tRNA-2-methylthio-N(6)-dimethylallyladenosine synthase.